The chain runs to 178 residues: NADH-quinone oxidoreductase subunit B 1 (178 aa).

The [4Fe-4S] cluster site is built by cysteine 39, cysteine 40, cysteine 104, and cysteine 135.

Belongs to the complex I 20 kDa subunit family. As to quaternary structure, NDH-1 is composed of 14 different subunits. Subunits NuoB, C, D, E, F, and G constitute the peripheral sector of the complex. It depends on [4Fe-4S] cluster as a cofactor.

Its subcellular location is the cell inner membrane. It catalyses the reaction a quinone + NADH + 5 H(+)(in) = a quinol + NAD(+) + 4 H(+)(out). Its function is as follows. NDH-1 shuttles electrons from NADH, via FMN and iron-sulfur (Fe-S) centers, to quinones in the respiratory chain. The immediate electron acceptor for the enzyme in this species is believed to be a menaquinone. Couples the redox reaction to proton translocation (for every two electrons transferred, four hydrogen ions are translocated across the cytoplasmic membrane), and thus conserves the redox energy in a proton gradient. The polypeptide is NADH-quinone oxidoreductase subunit B 1 (Cytophaga hutchinsonii (strain ATCC 33406 / DSM 1761 / CIP 103989 / NBRC 15051 / NCIMB 9469 / D465)).